A 539-amino-acid polypeptide reads, in one-letter code: RING finger protein 37 (539 aa).

A disordered region spans residues 226 to 249 (PALPMESDCDPGGQSESQHSPCTL). Over residues 239–249 (QSESQHSPCTL) the composition is skewed to polar residues. Positions 258-338 (DVPEEFLDPI…DRFLLQHSIS (81 aa)) constitute a U-box domain. Disordered regions lie at residues 359–399 (LPSR…EPTA) and 456–479 (GTRG…VSGP). Positions 374–395 (HYSLGMSASSSATSPLFSPTTS) are enriched in low complexity. An RING-type zinc finger spans residues 481-526 (CASCKQAFSSYSTNEPVYQLPCGHLLCRPCLSEKQRSQPMMCTACR).

Interacts with UBE2L3. Interacts with VCP. In terms of tissue distribution, expressed in testis and placenta.

It localises to the nucleus. The enzyme catalyses S-ubiquitinyl-[E2 ubiquitin-conjugating enzyme]-L-cysteine + [acceptor protein]-L-lysine = [E2 ubiquitin-conjugating enzyme]-L-cysteine + N(6)-ubiquitinyl-[acceptor protein]-L-lysine.. Its pathway is protein modification; protein ubiquitination. Functionally, may have a ubiquitin-protein ligase activity acting as an E3 ubiquitin-protein ligase or as a ubiquitin-ubiquitin ligase promoting elongation of ubiquitin chains on substrates. This chain is RING finger protein 37 (Ubox5), found in Mus musculus (Mouse).